We begin with the raw amino-acid sequence, 558 residues long: Ceramide kinase-like protein (558 aa).

The disordered stretch occupies residues 1-36; sequence MPWRRRRNRVSALEGGREEEAPPEAAAVPPALLTSP. 2 consecutive short sequence motifs (nuclear localization signal) follow at residues 2 to 9 and 102 to 106; these read PWRRRRNR and KLKRR. The 176-residue stretch at 164 to 339 folds into the DAGKc domain; it reads NRPKSLKILL…VDVCTFSTAG (176 aa).

In terms of processing, phosphorylated on serine residues. As to expression, isoform 1 and isoform 2 are expressed in adult retina, liver and pancreas as well as in fetal brain, lung and kidney. Isoform 3 is expressed in adult retina as well as in fetal lung and liver. Isoform 4 is expressed in adult retina, lung and kidney as well as in fetal lung and liver. Moderately expressed in retina, kidney, lung, testis, trachea, and pancreas. Weakly expressed in brain, placenta and liver.

The protein resides in the cytoplasm. The protein localises to the nucleus. It is found in the nucleolus. It localises to the golgi apparatus. Its subcellular location is the trans-Golgi network. The protein resides in the endoplasmic reticulum. Has no detectable ceramide-kinase activity. Overexpression of CERKL protects cells from apoptosis in oxidative stress conditions. This Homo sapiens (Human) protein is Ceramide kinase-like protein (CERKL).